Here is a 448-residue protein sequence, read N- to C-terminus: Beclin-1 (448 aa).

N-acetylmethionine is present on methionine 1. Phosphoserine is present on residues serine 14 and serine 29. A phosphoserine; by AMPK mark is found at serine 88, serine 91, and serine 94. The BH3 motif lies at 106 to 125 (TMENLSRRLKVTGDLFDIMS). Residues 110–157 (LSRRLKVTGDLFDIMSGQTDVDHPLCEECTDTLLDQLDTQLNVTENEC) are interaction with BCL2 and BCL2L1. Threonine 117 bears the Phosphothreonine; by DAPK1 mark. The stretch at 140 to 267 (DTLLDQLDTQ…QLDKLKKTNV (128 aa)) forms a coiled coil. The tract at residues 243-448 (DELKSVENQM…AWVSSQFYNK (206 aa)) is evolutionary conserved domain (ECD). Glycyl lysine isopeptide (Lys-Gly) (interchain with G-Cter in ubiquitin) cross-links involve residues lysine 400 and lysine 435. A required for membrane-association region spans residues 423 to 448 (WTKALKFMLTNLKWGLAWVSSQFYNK).

Belongs to the beclin family. As to quaternary structure, a homodimeric form is proposed to exist; this metastable form readily transits to ATG14- or UVRAG-containing complexes with BECN1:UVRAG being more stable than BECN1:ATG14. Component of the PI3K (PI3KC3/PI3K-III/class III phosphatidylinositol 3-kinase) complex the core of which is composed of the catalytic subunit PIK3C3, the regulatory subunit PIK3R4 and BECN1 associating with additional regulatory/auxiliary subunits to form alternative complex forms. Alternative complex forms containing a fourth regulatory subunit in a mutually exclusive manner are PI3K complex I (PI3KC3-C1) containing ATG14, and PI3K complex II (PI3KC3-C2) containing UVRAG. PI3KC3-C1 displays a V-shaped architecture with PIK3R4 serving as a bridge between PIK3C3 and the ATG14:BECN1 subcomplex. Both, PI3KC3-C1 and PI3KC3-C2, can associate with further regulatory subunits, such as RUBCN, SH3GLB1/Bif-1 and AMBRA1. PI3KC3-C1 probably associates with PIK3CB. Forms a complex with PPP2CA and AMBRA1; AMBRA1 and BECN1 components of the complex regulate MYC stability via different pathways. Component of the complex, at least composed of LRPPRC, BECN1 and BCL2; the interactions prevent BECN1 from forming an autophagy-inducing complex with PIK3C3. Interacts with AMBRA1, GOPC, GRID2. Interacts with BCL2 and BCL2L1 isoform Bcl-X(L); the interaction inhibits BECN1 function in promoting autophagy by interfering with the formation of the PI3K complex. Interacts with cytosolic HMGB1; inhibits the interaction of BECN1 and BCL2 leading to promotion of autophagy. Interacts with USP10, USP13, VMP1, DAPK1, RAB39A. Interacts with the poly-Gln domain of ATXN3; the interaction causes deubiquitination at Lys-400 and stabilizes BECN1. Interacts with SLAMF1. Interacts with TRIM5; the interaction causes activation of BECN1 by causing its dissociation from its inhibitors BCL2 and TAB2. Interacts with active ULK1 (phosphorylated on 'Ser-317') and MEFV simultaneously. Interacts with WDR81 and WDR91; negatively regulates the PI3 kinase/PI3K activity associated with endosomal membranes. Interacts with LAPTM4B; competes with EGFR for LAPTM4B binding; regulates EGFR activity. Interacts with TRIM50. Interacts with TRIM16. Interacts with ATG14; this interaction is increased in the absence of TMEM39A. Interacts with WASHC1; preventing interaction with AMBRA1 and the DCX(AMBRA1) complex and subsequent ubiquitination. Interacts with TRIM17. Interacts with BCL2L10/BCL-B (via BH1 domain). Interacts with SH3BGRL. Interacts with IRGM; enhancing BECN1-interacting partners and influencing the composition of the BECN1 complex. Interacts with ARMC3. Interacts with LRPPRC. (Microbial infection) Interacts with African swine fever virus (ASFV) apoptosis regulator Bcl-2 homolog; this interaction allows the virus to inhibit BECN1, and thus autophagy. Post-translationally, phosphorylation at Thr-117 by DAPK1 reduces its interaction with BCL2 and BCL2L1 and promotes induction of autophagy. In response to autophagic stimuli, phosphorylated at serine residues by AMPK in an ATG14-dependent manner, and this phosphorylation is critical for maximally efficient autophagy. In terms of processing, polyubiquitinated by NEDD4, both with 'Lys-11'- and 'Lys-63'-linkages. 'Lys-11'-linked polyubiquitination leads to degradation and is enhanced when the stabilizing interaction partner VPS34 is depleted. Deubiquitinated by USP10 and USP13, leading to stabilize the PIK3C3/VPS34-containing complexes. Polyubiquitinated at Lys-400 with 'Lys-48'-linkages. 'Lys-48'-linked polyubiquitination of Lys-400 leads to degradation. Deubiquitinated by ATXN3, leading to stabilization. Ubiquitinated at Lys-435 via 'Lys-63'-linkage by the DCX(AMBRA1) complex, thereby increasing the association between BECN1 and PIK3C3 to promote PIK3C3 activity. 'Lys-48'-linked ubiquitination by RNF216 leads to proteasomal degradation and autophagy inhibition. Proteolytically processed by caspases including CASP8 and CASP3; the C-terminal fragments lack autophagy-inducing capacity and are proposed to induce apoptosis. Thus the cleavage is proposed to be an determinant to switch from autophagy to apoptosis pathways affecting cellular homeostasis including viral infections and survival of tumor cells.

The protein localises to the cytoplasm. Its subcellular location is the golgi apparatus. It is found in the trans-Golgi network membrane. The protein resides in the endosome membrane. It localises to the endoplasmic reticulum membrane. The protein localises to the mitochondrion membrane. Its subcellular location is the cytoplasmic vesicle. It is found in the autophagosome. The protein resides in the mitochondrion. It localises to the nucleus. Its function is as follows. Plays a central role in autophagy. Acts as a core subunit of the PI3K complex that mediates formation of phosphatidylinositol 3-phosphate; different complex forms are believed to play a role in multiple membrane trafficking pathways: PI3KC3-C1 is involved in initiation of autophagosomes and PI3KC3-C2 in maturation of autophagosomes and endocytosis. Involved in regulation of degradative endocytic trafficking and required for the abscission step in cytokinesis, probably in the context of PI3KC3-C2. Essential for the formation of PI3KC3-C2 but not PI3KC3-C1 PI3K complex forms. Involved in endocytosis. May play a role in antiviral host defense. In terms of biological role, beclin-1-C 35 kDa localized to mitochondria can promote apoptosis; it induces the mitochondrial translocation of BAX and the release of proapoptotic factors. This chain is Beclin-1 (BECN1), found in Sus scrofa (Pig).